The following is a 438-amino-acid chain: AP-2 complex subunit mu (438 aa).

Positions 177–437 constitute an MHD domain; that stretch reads KNEVFLDIVE…ITKAGSYEIR (261 aa).

It belongs to the adaptor complexes medium subunit family. As to quaternary structure, adaptor protein complex 2 (AP-2) is a heterotetramer composed of two large adaptins (alpha-type and beta-type subunits), a medium adaptin (mu-type subunit) and a small adaptin (sigma-type subunit).

The protein localises to the cell membrane. It localises to the membrane. It is found in the coated pit. The protein resides in the golgi apparatus. Its subcellular location is the trans-Golgi network membrane. Subunit of the adaptor protein complex 2 (AP-2). Adaptor protein complexes function in protein transport via transport vesicles in different membrane traffic pathways. Adaptor protein complexes are vesicle coat components and appear to be involved in cargo selection and vesicle formation. AP-2 is involved in clathrin-dependent endocytosis in which cargo proteins are incorporated into vesicles surrounded by clathrin (clathrin-coated vesicles, CCVs) which are destined for fusion with the early endosome. AP-2 recognizes Y-X-X-Phi endocytosis signal motif within the cytosolic tails of transmembrane cargo molecules. The complex binds polyphosphoinositides. The protein is AP-2 complex subunit mu (AP2M) of Arabidopsis thaliana (Mouse-ear cress).